The primary structure comprises 162 residues: Interleukin-15 (162 aa).

A signal peptide spans 1-29; it reads MRISKPHLRITSIQCYVCLLLNTHFLTEA. Positions 30–48 are excised as a propeptide; the sequence is GIRVFILGCISAGIPKTEA. 2 disulfides stabilise this stretch: cysteine 83/cysteine 133 and cysteine 90/cysteine 136. Residues asparagine 119, asparagine 127, and asparagine 143 are each glycosylated (N-linked (GlcNAc...) asparagine).

Belongs to the IL-15/IL-21 family.

The protein localises to the secreted. Functionally, cytokine that plays a major role in the development of inflammatory and protective immune responses to microbial invaders and parasites by modulating immune cells of both the innate and adaptive immune systems. Stimulates the proliferation of natural killer cells, T-cells and B-cells and promotes the secretion of several cytokines. In monocytes, induces the production of IL8 and monocyte chemotactic protein 1/CCL2, two chemokines that attract neutrophils and monocytes respectively to sites of infection. Unlike most cytokines, which are secreted in soluble form, IL15 is expressed in association with its high affinity IL15RA on the surface of IL15-producing cells and delivers signals to target cells that express IL2RB and IL2RG receptor subunits. Binding to its receptor triggers the phosphorylation of JAK1 and JAK3 and the recruitment and subsequent phosphorylation of signal transducer and activator of transcription-3/STAT3 and STAT5. In mast cells, induces the rapid tyrosine phosphorylation of STAT6 and thereby controls mast cell survival and release of cytokines such as IL4. The protein is Interleukin-15 (IL15) of Marmota himalayana (Himalayan marmot).